A 923-amino-acid polypeptide reads, in one-letter code: Calmodulin-binding transcription activator 5 (923 aa).

The segment at residues 25–151 is a DNA-binding region (CG-1); it reads IQTMLDEAYS…YRETHEVHAA (127 aa). The interval 272–372 is transcription activation; the sequence is VYQNNNSCGA…HSHSDIPEQV (101 aa). The ANK repeat unit spans residues 611 to 640; that stretch reads QGWTALHWAAYYGREKMVAALLSAGARPNL. IQ domains are found at residues 757–786, 799–828, and 875–904; these read NIIA…IQYR, MRKK…SVGV, and LERS…AHEE. The tract at residues 824–846 is calmodulin-binding; the sequence is WSVGVLEKAILRWRLKRKGFRGL. Residues 887-914 adopt a coiled-coil conformation; it reads RSKKAQQDYRRMKLAHEEAQLEYDGMQE.

This sequence belongs to the CAMTA family. As to expression, expressed in roots, stems, leaves, pollen, top of sepals and siliques.

Its subcellular location is the nucleus. Transcription activator. Binds to the DNA consensus sequence 5'-[ACG]CGCG[GTC]-3'. Regulates transcriptional activity in response to calcium signals. Binds calmodulin in a calcium-dependent manner. Involved in response to cold. Contributes together with CAMTA3 to the positive regulation of the cold-induced expression of DREB1A/CBF3, DREB1B/CBF1 and DREB1C/CBF2. The sequence is that of Calmodulin-binding transcription activator 5 from Arabidopsis thaliana (Mouse-ear cress).